The primary structure comprises 384 residues: Guanine nucleotide-binding protein alpha-1 subunit (384 aa).

Glycine 2 carries N-myristoyl glycine lipidation. Cysteine 5 carries the S-palmitoyl cysteine lipid modification. In terms of domain architecture, G-alpha spans histidine 38–leucine 384. Positions lysine 41–threonine 54 are G1 motif. GTP contacts are provided by glutamate 49, serine 50, glycine 51, lysine 52, serine 53, threonine 54, aspartate 163, leucine 188, threonine 194, glycine 222, asparagine 288, lysine 289, aspartate 291, and alanine 356. Position 53 (serine 53) interacts with Mg(2+). Positions aspartate 186 to threonine 194 are G2 motif. Threonine 194 serves as a coordination point for Mg(2+). A G3 motif region spans residues tyrosine 215–arginine 224. Residues methionine 284 to aspartate 291 are G4 motif. The interval threonine 354–glutamine 359 is G5 motif.

It belongs to the G-alpha family. G proteins are composed of 3 units; alpha, beta and gamma. The alpha chain contains the guanine nucleotide binding site. The cofactor is Mg(2+).

Its function is as follows. Guanine nucleotide-binding proteins (G proteins) are involved as modulators or transducers in various transmembrane signaling systems. The protein is Guanine nucleotide-binding protein alpha-1 subunit (GPA1) of Pisum sativum (Garden pea).